The following is a 439-amino-acid chain: Branched-chain amino acid permease BrnQ (439 aa).

Over 1–9 (MTHQLKSRD) the chain is Cytoplasmic. The chain crosses the membrane as a helical span at residues 10–30 (IIALGFMTFALFVGAGNIIFP). Residues 31–43 (PMVGLQAGEHVWT) lie on the Periplasmic side of the membrane. Residues 44 to 64 (AAIGFLITAVGLPVLTVVALA) form a helical membrane-spanning segment. The Cytoplasmic segment spans residues 65 to 79 (KVGGGVDSLSTPIGK). A helical membrane pass occupies residues 80-100 (VAGLLLATVCYLAVGPLFATP). The Periplasmic segment spans residues 101–118 (RTATVSFEVGIAPLTGDS). Residues 119–139 (AMPLLIYSVVYFAIVILVSLY) traverse the membrane as a helical segment. Over 140-149 (PGKLLDTVGN) the chain is Cytoplasmic. The chain crosses the membrane as a helical span at residues 150-170 (FLAPLKIIALVILSVAAIVWP). Residues 171-189 (AGPISNALDAYQNAAFSNG) lie on the Periplasmic side of the membrane. Residues 190–210 (FVNGYLTMDTLGAMVFGIVIV) traverse the membrane as a helical segment. Over 211–226 (NAARSRGVTEARLLTR) the chain is Cytoplasmic. The helical transmembrane segment at 227 to 247 (YTVWAGLMAGVGLTLLYLALF) threads the bilayer. Topologically, residues 248–277 (RLGSDSATLVDQSANGAAILHAYVQHTFGG) are periplasmic. A helical membrane pass occupies residues 278–298 (AGSFLLAALIFIACLVTAVGL). Over 299–316 (TCACAEFFAQYIPLSYRT) the chain is Cytoplasmic. Residues 317 to 337 (LVFILGGFSMVVSNLGLSHLI) form a helical membrane-spanning segment. Position 338 (Gln-338) is a topological domain, periplasmic. The helical transmembrane segment at 339–359 (ISIPVLTAIYPPCIALVVLSF) threads the bilayer. Residues 360-369 (TRSWWHNSTR) are Cytoplasmic-facing. A helical transmembrane segment spans residues 370 to 390 (IIAPAMFISLLFGILDGIKAS). The Periplasmic segment spans residues 391 to 404 (AFGDMLPAWSQRLP). A helical transmembrane segment spans residues 405–425 (LAEQGLAWLMPTVVMVILAII). Over 426 to 439 (WDRAAGRQVTSSAH) the chain is Cytoplasmic.

This sequence belongs to the branched chain amino acid transporter family.

The protein resides in the cell inner membrane. Its function is as follows. Liv-II branched chain amino acid transport system, which transports leucine, valine and isoleucine. In Salmonella typhimurium (strain LT2 / SGSC1412 / ATCC 700720), this protein is Branched-chain amino acid permease BrnQ.